The chain runs to 418 residues: NADH-quinone oxidoreductase subunit D (418 aa).

Belongs to the complex I 49 kDa subunit family. As to quaternary structure, NDH-1 is composed of 14 different subunits. Subunits NuoB, C, D, E, F, and G constitute the peripheral sector of the complex.

The protein resides in the cell inner membrane. It catalyses the reaction a quinone + NADH + 5 H(+)(in) = a quinol + NAD(+) + 4 H(+)(out). In terms of biological role, NDH-1 shuttles electrons from NADH, via FMN and iron-sulfur (Fe-S) centers, to quinones in the respiratory chain. The immediate electron acceptor for the enzyme in this species is believed to be ubiquinone. Couples the redox reaction to proton translocation (for every two electrons transferred, four hydrogen ions are translocated across the cytoplasmic membrane), and thus conserves the redox energy in a proton gradient. The chain is NADH-quinone oxidoreductase subunit D from Neisseria meningitidis serogroup C (strain 053442).